We begin with the raw amino-acid sequence, 263 residues long: uncharacterized protein (263 aa).

The N-terminal stretch at 1–22 (MRYLKRVVLYRIVMVLSVFIIG) is a signal peptide. C23 is lipidated: N-palmitoyl cysteine. C23 is lipidated: S-diacylglycerol cysteine.

It belongs to the staphylococcal tandem lipoprotein family.

It is found in the cell membrane. This is an uncharacterized protein from Staphylococcus aureus (strain bovine RF122 / ET3-1).